Here is a 155-residue protein sequence, read N- to C-terminus: Ribonuclease H (155 aa).

In terms of domain architecture, RNase H type-1 spans 1 to 142 (MLKQVEIFTD…CDELARAAAM (142 aa)). Mg(2+)-binding residues include aspartate 10, glutamate 48, aspartate 70, and aspartate 134.

This sequence belongs to the RNase H family. As to quaternary structure, monomer. Mg(2+) is required as a cofactor.

It localises to the cytoplasm. It carries out the reaction Endonucleolytic cleavage to 5'-phosphomonoester.. Endonuclease that specifically degrades the RNA of RNA-DNA hybrids. The protein is Ribonuclease H of Escherichia fergusonii (strain ATCC 35469 / DSM 13698 / CCUG 18766 / IAM 14443 / JCM 21226 / LMG 7866 / NBRC 102419 / NCTC 12128 / CDC 0568-73).